The following is a 230-amino-acid chain: Ion-translocating oxidoreductase complex subunit E (230 aa).

6 helical membrane-spanning segments follow: residues 18 to 38 (ALVQ…ATNA), 39 to 59 (LGLG…VSAL), 63 to 83 (TPAE…VSAV), 86 to 106 (LINA…PLIV), 125 to 145 (WLSA…MFVL), and 182 to 202 (PFLL…MLAV).

This sequence belongs to the NqrDE/RnfAE family. The complex is composed of six subunits: RsxA, RsxB, RsxC, RsxD, RsxE and RsxG.

The protein resides in the cell inner membrane. Functionally, part of a membrane-bound complex that couples electron transfer with translocation of ions across the membrane. Required to maintain the reduced state of SoxR. The protein is Ion-translocating oxidoreductase complex subunit E of Salmonella newport (strain SL254).